A 211-amino-acid chain; its full sequence is WUSCHEL-related homeobox 14 (211 aa).

Positions 91–155 form a DNA-binding region, homeobox; WUS-type; it reads STRHRWTPTS…NRRARSKRKQ (65 aa). The interval 147 to 183 is disordered; the sequence is RRARSKRKQPQTTTANGQADDVAVTTEERRSCGDSGG.

Belongs to the WUS homeobox family. As to expression, expressed in root vasculature, pericycle and stamen. Expressed in the procambium during stem maturation.

The protein resides in the nucleus. Its function is as follows. Acts redundantly with WOX4 downstream of the TDR/PXY receptor kinase to regulate procambial cell proliferation and differentiation in vascular tissue, independently of any role in vascular. Involved in the regulation of gibberellin (GA) biosynthesis pathway. Positively regulates the expression of the GA biosynthesis gene GA3OX1, and negatively regulates the expression of GA2OX1 during secondary growth, which increases bioactive GA content in the inflorescence stem. Promotes vascular cell differentiation in the inflorescence stem. Transcription factor which may be involved in developmental processes. The sequence is that of WUSCHEL-related homeobox 14 (WOX14) from Arabidopsis thaliana (Mouse-ear cress).